Reading from the N-terminus, the 525-residue chain is GMP synthase [glutamine-hydrolyzing] (525 aa).

Residues 8–207 enclose the Glutamine amidotransferase type-1 domain; it reads KILILDFGSQ…ALDICGCAAN (200 aa). The active-site Nucleophile is the Cys-85. Residues His-181 and Glu-183 contribute to the active site. One can recognise a GMPS ATP-PPase domain in the interval 208-400; sequence WKPSSIIEDA…LGLPYNMLYR (193 aa). 235 to 241 is an ATP binding site; the sequence is SGGVDSS.

Homodimer.

It catalyses the reaction XMP + L-glutamine + ATP + H2O = GMP + L-glutamate + AMP + diphosphate + 2 H(+). Its pathway is purine metabolism; GMP biosynthesis; GMP from XMP (L-Gln route): step 1/1. Functionally, catalyzes the synthesis of GMP from XMP. This chain is GMP synthase [glutamine-hydrolyzing], found in Shewanella sp. (strain MR-7).